A 341-amino-acid chain; its full sequence is Uroporphyrinogen decarboxylase (341 aa).

Substrate-binding positions include 23–27, Asp-73, Tyr-148, Ser-203, and His-318; that span reads RQAGR.

It belongs to the uroporphyrinogen decarboxylase family. In terms of assembly, homodimer.

The protein resides in the cytoplasm. The enzyme catalyses uroporphyrinogen III + 4 H(+) = coproporphyrinogen III + 4 CO2. It functions in the pathway porphyrin-containing compound metabolism; protoporphyrin-IX biosynthesis; coproporphyrinogen-III from 5-aminolevulinate: step 4/4. Its function is as follows. Catalyzes the decarboxylation of four acetate groups of uroporphyrinogen-III to yield coproporphyrinogen-III. The sequence is that of Uroporphyrinogen decarboxylase from Brucella suis (strain ATCC 23445 / NCTC 10510).